A 393-amino-acid polypeptide reads, in one-letter code: MVKQVDFAEVKLSEKFLGAGSGGAVRKATFQNQEIAVKIFDFLEETIKKNAEREITHLSEIDHENVIRVIGRASNGKKDYLLMEYLEEGSLHNYLYGDDKWEYTVEQAVRWALQCAKALAYLHSLDRPIVHRDIKPQNMLLYNQHEDLKICDFGLATDMSNNKTDMQGTLRYMAPEAIKHLKYTAKCDVYSFGIMLWELMTRQLPYSHLENPNSQYAIMKAISSGEKLPMEAVRSDCPEGIKQLMECCMDINPEKRPSMKEIEKFLGEQYESGTDEDFIKPLDEDTVAVVTYHVDSSGSRIMRVDFWRHQLPSIRMTFPIVKREAERLGKTVVREMAKAAADGDREVRRAEKDTERETSRAAHNGERETRRAGQDVGRETVRAVKKIGKKLRF.

In terms of domain architecture, Protein kinase spans 11–266; that stretch reads KLSEKFLGAG…PSMKEIEKFL (256 aa). Residues 17–25 and lysine 38 contribute to the ATP site; that span reads LGAGSGGAV. The active-site Proton acceptor is the aspartate 133. The disordered stretch occupies residues 339-379; that stretch reads AAADGDREVRRAEKDTERETSRAAHNGERETRRAGQDVGRE.

This sequence belongs to the protein kinase superfamily. STE Ser/Thr protein kinase family. MAP kinase kinase kinase subfamily. It depends on Mg(2+) as a cofactor.

It catalyses the reaction L-seryl-[protein] + ATP = O-phospho-L-seryl-[protein] + ADP + H(+). The catalysed reaction is L-threonyl-[protein] + ATP = O-phospho-L-threonyl-[protein] + ADP + H(+). This is Putative mitogen-activated protein kinase kinase kinase 7-like (Takl1) from Drosophila melanogaster (Fruit fly).